The sequence spans 132 residues: Monothiol glutaredoxin-S9 (132 aa).

A disordered region spans residues 16–38; it reads ASRPATAAAAPPPPPPRGEEEEV. The Glutaredoxin domain occupies 35-131; that stretch reads EEEVRRAVAE…PILKEAGALW (97 aa). Position 55 (Cys-55) interacts with [2Fe-2S] cluster. The Responsive for interaction with TGA factors signature appears at 129-132; it reads ALWL.

It belongs to the glutaredoxin family. CC-type subfamily.

The protein resides in the cytoplasm. Its subcellular location is the nucleus. In terms of biological role, may only reduce GSH-thiol disulfides, but not protein disulfides. This is Monothiol glutaredoxin-S9 (GRXS9) from Oryza sativa subsp. japonica (Rice).